A 1198-amino-acid polypeptide reads, in one-letter code: DNA polymerase II large subunit (1198 aa).

Disordered stretches follow at residues 281–332 (YKTG…PQKK) and 534–553 (HWAE…AAES). The span at 286-319 (DTDEADADSDDGTDEDAADDSDIDDSSAGDEEAD) shows a compositional bias: acidic residues.

This sequence belongs to the archaeal DNA polymerase II family. Heterodimer of a large subunit and a small subunit.

The catalysed reaction is DNA(n) + a 2'-deoxyribonucleoside 5'-triphosphate = DNA(n+1) + diphosphate. It carries out the reaction Exonucleolytic cleavage in the 3'- to 5'-direction to yield nucleoside 5'-phosphates.. Its function is as follows. Possesses two activities: a DNA synthesis (polymerase) and an exonucleolytic activity that degrades single-stranded DNA in the 3'- to 5'-direction. Has a template-primer preference which is characteristic of a replicative DNA polymerase. This is DNA polymerase II large subunit from Natronomonas pharaonis (strain ATCC 35678 / DSM 2160 / CIP 103997 / JCM 8858 / NBRC 14720 / NCIMB 2260 / Gabara) (Halobacterium pharaonis).